A 334-amino-acid chain; its full sequence is Methionine adenosyltransferase 2 subunit beta (334 aa).

Residues 37-40 (TGLL), 60-62 (FRR), 71-72 (NL), C93, R97, Y159, and L185 each bind NADP(+). Position 309 is a phosphothreonine (T309). Residues 319 to 334 (LWPFLIDKRWRQTVFH) form a required for interaction with MAT2A region.

Belongs to the dTDP-4-dehydrorhamnose reductase family. MAT2B subfamily. In terms of assembly, heterotrimer; composed of a catalytic MAT2A homodimer that binds one regulatory MAT2B chain. Heterohexamer; composed of a central, catalytic MAT2A homotetramer flanked on either side by a regulatory MAT2B chain. NADP binding increases the affinity for MAT2A.

It participates in amino-acid biosynthesis; S-adenosyl-L-methionine biosynthesis; S-adenosyl-L-methionine from L-methionine: step 1/1. Functionally, regulatory subunit of S-adenosylmethionine synthetase 2, an enzyme that catalyzes the formation of S-adenosylmethionine from methionine and ATP. Regulates MAT2A catalytic activity by changing its kinetic properties, increasing its affinity for L-methionine. Can bind NADP (in vitro). This Rattus norvegicus (Rat) protein is Methionine adenosyltransferase 2 subunit beta (Mat2b).